Consider the following 396-residue polypeptide: Elongation factor Tu (396 aa).

Residues 10–206 (KPHVNVGTIG…ALDTYIPTPE (197 aa)) form the tr-type G domain. Residues 19–26 (GHVDHGKT) are G1. A GTP-binding site is contributed by 19 to 26 (GHVDHGKT). A Mg(2+)-binding site is contributed by Thr-26. A G2 region spans residues 60-64 (GITIN). Positions 81–84 (DCPG) are G3. GTP-binding positions include 81 to 85 (DCPGH) and 136 to 139 (NKCD). A G4 region spans residues 136–139 (NKCD). Positions 174-176 (SAK) are G5.

It belongs to the TRAFAC class translation factor GTPase superfamily. Classic translation factor GTPase family. EF-Tu/EF-1A subfamily. As to quaternary structure, monomer.

The protein resides in the cytoplasm. The catalysed reaction is GTP + H2O = GDP + phosphate + H(+). GTP hydrolase that promotes the GTP-dependent binding of aminoacyl-tRNA to the A-site of ribosomes during protein biosynthesis. This chain is Elongation factor Tu, found in Burkholderia cenocepacia (strain HI2424).